The chain runs to 48 residues: Small, acid-soluble spore protein P (48 aa).

Residues M1–K12 show a composition bias toward basic and acidic residues. Residues M1–M48 form a disordered region. The segment covering K30–M48 has biased composition (basic residues).

This sequence belongs to the SspP family.

The protein localises to the spore core. This is Small, acid-soluble spore protein P from Bacillus velezensis (strain DSM 23117 / BGSC 10A6 / LMG 26770 / FZB42) (Bacillus amyloliquefaciens subsp. plantarum).